Here is a 287-residue protein sequence, read N- to C-terminus: Large ribosomal subunit protein uL2 (287 aa).

The disordered stretch occupies residues 214 to 287; sequence LGRRPEVRGS…SKRGRGGRDA (74 aa). A compositionally biased stretch (basic residues) spans 271-287; sequence QRRRRKSSKRGRGGRDA.

The protein belongs to the universal ribosomal protein uL2 family. In terms of assembly, part of the 50S ribosomal subunit. Forms a bridge to the 30S subunit in the 70S ribosome.

Functionally, one of the primary rRNA binding proteins. Required for association of the 30S and 50S subunits to form the 70S ribosome, for tRNA binding and peptide bond formation. It has been suggested to have peptidyltransferase activity; this is somewhat controversial. Makes several contacts with the 16S rRNA in the 70S ribosome. This Synechococcus elongatus (strain ATCC 33912 / PCC 7942 / FACHB-805) (Anacystis nidulans R2) protein is Large ribosomal subunit protein uL2.